We begin with the raw amino-acid sequence, 213 residues long: MKSLQALFGGTFDPVHYGHLNPVETLANLIGLTRVTIIPNNVPPHRPQPEANSVQRKHMLELAIADKPLFTLDERELKRNAPSYTAQTLKEWRQEQGPDVPLAFIIGQDSLLTFPTWYEYETILDNAHLIVCRRPGYPLEMAQPQYQQWLEDHLTHNQEDLHLQPAGKIYLAETPWFNISATIIRERLQNGESCEDLLPEPVLTYINQQGLYR.

It belongs to the NadD family.

The enzyme catalyses nicotinate beta-D-ribonucleotide + ATP + H(+) = deamido-NAD(+) + diphosphate. It participates in cofactor biosynthesis; NAD(+) biosynthesis; deamido-NAD(+) from nicotinate D-ribonucleotide: step 1/1. Its function is as follows. Catalyzes the reversible adenylation of nicotinate mononucleotide (NaMN) to nicotinic acid adenine dinucleotide (NaAD). This Shigella boydii serotype 18 (strain CDC 3083-94 / BS512) protein is Probable nicotinate-nucleotide adenylyltransferase.